A 508-amino-acid chain; its full sequence is Photosystem II CP47 reaction center protein (508 aa).

Helical transmembrane passes span 21–36 (SVHI…WAGS), 101–115 (IVFS…IWHW), 140–156 (GIHL…FGAF), 203–218 (IAAG…FHLS), 237–252 (VLSS…AFVV), and 457–472 (SFAL…HGAR).

Belongs to the PsbB/PsbC family. PsbB subfamily. As to quaternary structure, PSII is composed of 1 copy each of membrane proteins PsbA, PsbB, PsbC, PsbD, PsbE, PsbF, PsbH, PsbI, PsbJ, PsbK, PsbL, PsbM, PsbT, PsbX, PsbY, PsbZ, Psb30/Ycf12, at least 3 peripheral proteins of the oxygen-evolving complex and a large number of cofactors. It forms dimeric complexes. Binds multiple chlorophylls. PSII binds additional chlorophylls, carotenoids and specific lipids. serves as cofactor.

The protein localises to the plastid. The protein resides in the chloroplast thylakoid membrane. Its function is as follows. One of the components of the core complex of photosystem II (PSII). It binds chlorophyll and helps catalyze the primary light-induced photochemical processes of PSII. PSII is a light-driven water:plastoquinone oxidoreductase, using light energy to abstract electrons from H(2)O, generating O(2) and a proton gradient subsequently used for ATP formation. The sequence is that of Photosystem II CP47 reaction center protein from Olimarabidopsis pumila (Dwarf rocket).